Reading from the N-terminus, the 400-residue chain is Cytohesin-3 (400 aa).

Positions 14–61 (EDLSLEEREELLDIRRRKKELIDDIERLKYEIAEVMTEIDNLTSVEES) form a coiled coil. In terms of domain architecture, SEC7 spans 77–206 (FNMDPKKGIQ…IIMLNTSLHN (130 aa)). The PH domain maps to 265 to 381 (PDREGWLLKL…WMKSIKASIS (117 aa)). Residues 273–281 (KLGGGRVKT), arginine 285, tyrosine 296, arginine 306, and asparagine 355 each bind a 1,2-diacyl-sn-glycero-3-phospho-(1D-myo-inositol-3,4,5-trisphosphate). Residues 392–400 (RKRRIANKK) are C-terminal autoinhibitory region.

Interacts with TAMALIN. Present in all tissues tested, with highest protein levels in brain and adrenal.

It is found in the cytoplasm. Its subcellular location is the cytosol. It localises to the cell membrane. Promotes guanine-nucleotide exchange on ARF1. Promotes the activation of ARF factors through replacement of GDP with GTP. The sequence is that of Cytohesin-3 (Cyth3) from Rattus norvegicus (Rat).